The chain runs to 180 residues: High mobility group protein B1 (180 aa).

The Nuclear localization signal (NLS) 1 signature appears at 1–8 (VNFSEFSK). A DNA-binding region (HMG box 1) is located at residues 1–44 (VNFSEFSKKCSERWKTMSAKEKGKFEDMAKADKARYEREMKTYI). Position 8 is an N6-acetyllysine (lysine 8). Isoglutamyl lysine isopeptide (Lys-Gln) (interchain with Q-?) cross-links involve residues lysine 8 and lysine 9. Position 10 is a cysteine sulfonic acid (-SO3H) (cysteine 10). Lysine 33 participates in a covalent cross-link: Isoglutamyl lysine isopeptide (Lys-Gln) (interchain with Q-?). An LPS binding (Lipid A) region spans residues 45–61 (PPKGETKKKFKDPNAPK). The tract at residues 54–73 (FKDPNAPKRPPSAFFLFCSE) is cytokine-stimulating activity. Residue lysine 55 is modified to N6-acetyllysine. Positions 60–128 (PKRPPSAFFL…KYEKDIAAYR (69 aa)) form a DNA-binding region, HMG box 2. The residue at position 65 (serine 65) is a Phosphoserine. Cysteine 71 is modified (cysteine sulfonic acid (-SO3H)). An N6-acetyllysine mark is found at lysine 92, lysine 93, lysine 106, lysine 137, lysine 138, lysine 142, and lysine 145. Residues 115 to 148 (KLKEKYEKDIAAYRAKGKPDAAKKGVVKAEKSKK) are binding to AGER/RAGE. The segment covering 126–144 (AYRAKGKPDAAKKGVVKAE) has biased composition (basic and acidic residues). Positions 126-180 (AYRAKGKPDAAKKGVVKAEKSKKKKEEEDDEEDEEDEEEEEEEEDEDEEEDDDDE) are disordered. The short motif at 143–149 (AEKSKKK) is the Nuclear localization signal (NLS) 2 element. Residues 143–149 (AEKSKKK) form an NLS 2 region. Lysine 145 is covalently cross-linked (Isoglutamyl lysine isopeptide (Lys-Gln) (interchain with Q-?)). The residue at position 146 (serine 146) is an ADP-ribosylserine. N6-acetyllysine is present on residues lysine 147, lysine 148, lysine 149, and lysine 150. Residues lysine 147, lysine 148, and lysine 149 each participate in an isoglutamyl lysine isopeptide (Lys-Gln) (interchain with Q-?) cross-link. Positions 152–180 (EEDDEEDEEDEEEEEEEEDEDEEEDDDDE) are enriched in acidic residues.

The protein belongs to the HMGB family. Interacts (fully reduced HMGB1) with CXCL12; probably in a 1:2 ratio involving two molecules of CXCL12, each interacting with one HMG box of HMGB1; inhibited by glycyrrhizin. Associates with the TLR4:LY96 receptor complex. Component of the RAG complex composed of core components RAG1 and RAG2, and associated component HMGB1 or HMGB2. Interacts (in cytoplasm upon starvation) with BECN1; inhibits the interaction of BECN1 and BCL2 leading to promotion of autophagy. Interacts with KPNA1; involved in nuclear import. Interacts with SREBF1, TLR2, TLR4, TLR9, PTPRZ1, APEX1, FEN1, POLB, TERT. Interacts with IL1B, AGER, MSH2, XPA, XPC, HNF1A, TP53. Interacts with CD24; the probable CD24:SIGLEC10 complex is proposed to inhibit HGMB1-mediated tissue damage immune response. Interacts with THBD; prevents HGMB1 interaction with ACER/RAGE and inhibits HGMB1 pro-inflammatory activity. Interacts with HAVCR2; impairs HMGB1 binding to B-DNA and likely HMGB1-mediated innate immune response. Interacts with XPO1; mediating nuclear export. Interacts with receptor RAGE/AGER. Post-translationally, phosphorylated at serine residues. Phosphorylation in both NLS regions is required for cytoplasmic translocation followed by secretion. Acetylated on multiple sites upon stimulation with LPS. Acetylation on lysine residues in the nuclear localization signals (NLS 1 and NLS 2) leads to cytoplasmic localization and subsequent secretion. In terms of processing, reduction/oxidation of cysteine residues and a possible intramolecular disulfide bond give rise to different redox forms with specific functional activities in various cellular compartments: 1- fully reduced HMGB1 (HMGB1C23hC45hC106h), 2-disulfide HMGB1 (HMGB1C23-C45C106h) and 3- sulfonyl HMGB1 (HMGB1C23soC45soC106so). Post-translationally, poly-ADP-ribosylated by PARP1 when secreted following stimulation with LPS. In vitro cleavage by CASP1 is liberating a HMG box 1-containing peptide which may mediate immunogenic activity; the peptide antagonizes apoptosis-induced immune tolerance. Can be proteolytically cleaved by a thrombin:thrombomodulin complex; reduces binding to heparin and pro-inflammatory activities. In terms of processing, forms covalent cross-links mediated by transglutaminase TGM2, between a glutamine and the epsilon-amino group of a lysine residue, forming homopolymers and heteropolymers.

The protein resides in the nucleus. Its subcellular location is the chromosome. It localises to the cytoplasm. The protein localises to the secreted. It is found in the cell membrane. The protein resides in the endosome. Its subcellular location is the endoplasmic reticulum-Golgi intermediate compartment. Its function is as follows. Multifunctional redox sensitive protein with various roles in different cellular compartments. In the nucleus is one of the major chromatin-associated non-histone proteins and acts as a DNA chaperone involved in replication, transcription, chromatin remodeling, V(D)J recombination, DNA repair and genome stability. Proposed to be an universal biosensor for nucleic acids. Promotes host inflammatory response to sterile and infectious signals and is involved in the coordination and integration of innate and adaptive immune responses. In the cytoplasm functions as a sensor and/or chaperone for immunogenic nucleic acids implicating the activation of TLR9-mediated immune responses, and mediates autophagy. Acts as a danger-associated molecular pattern (DAMP) molecule that amplifies immune responses during tissue injury. Released to the extracellular environment can bind DNA, nucleosomes, IL-1 beta, CXCL12, AGER isoform 2/sRAGE, lipopolysaccharide (LPS) and lipoteichoic acid (LTA), and activates cells through engagement of multiple surface receptors. In the extracellular compartment fully reduced HMGB1 (released by necrosis) acts as a chemokine, disulfide HMGB1 (actively secreted) as a cytokine, and sulfonyl HMGB1 (released from apoptotic cells) promotes immunological tolerance. Has proangiogenic activity. May be involved in platelet activation. Binds to phosphatidylserine and phosphatidylethanolamide. Bound to RAGE mediates signaling for neuronal outgrowth. May play a role in accumulation of expanded polyglutamine (polyQ) proteins. Functionally, nuclear functions are attributed to fully reduced HGMB1. Associates with chromatin and binds DNA with a preference to non-canonical DNA structures such as single-stranded DNA, DNA-containing cruciforms or bent structures, supercoiled DNA and ZDNA. Can bent DNA and enhance DNA flexibility by looping thus providing a mechanism to promote activities on various gene promoters by enhancing transcription factor binding and/or bringing distant regulatory sequences into close proximity. May be involved in nucleotide excision repair (NER), mismatch repair (MMR) and base excision repair (BER) pathways, and double strand break repair such as non-homologous end joining (NHEJ). Involved in V(D)J recombination by acting as a cofactor of the RAG complex: acts by stimulating cleavage and RAG protein binding at the 23 bp spacer of conserved recombination signal sequences (RSS). In vitro can displace histone H1 from highly bent DNA. Can restructure the canonical nucleosome leading to relaxation of structural constraints for transcription factor-binding. Enhances binding of sterol regulatory element-binding proteins (SREBPs) such as SREBF1 to their cognate DNA sequences and increases their transcriptional activities. Facilitates binding of TP53 to DNA. May be involved in mitochondrial quality control and autophagy in a transcription-dependent fashion implicating HSPB1. Can modulate the activity of the telomerase complex and may be involved in telomere maintenance. In terms of biological role, in the cytoplasm proposed to dissociate the BECN1:BCL2 complex via competitive interaction with BECN1 leading to autophagy activation. Can protect BECN1 and ATG5 from calpain-mediated cleavage and thus proposed to control their proautophagic and proapoptotic functions and to regulate the extent and severity of inflammation-associated cellular injury. In myeloid cells has a protective role against endotoxemia and bacterial infection by promoting autophagy. Involved in endosomal translocation and activation of TLR9 in response to CpG-DNA in macrophages. In the extracellular compartment (following either active secretion or passive release) involved in regulation of the inflammatory response. Fully reduced HGMB1 (which subsequently gets oxidized after release) in association with CXCL12 mediates the recruitment of inflammatory cells during the initial phase of tissue injury; the CXCL12:HMGB1 complex triggers CXCR4 homodimerization. Induces the migration of monocyte-derived immature dendritic cells and seems to regulate adhesive and migratory functions of neutrophils implicating AGER/RAGE and ITGAM. Can bind to various types of DNA and RNA including microbial unmethylated CpG-DNA to enhance the innate immune response to nucleic acids. Proposed to act in promiscuous DNA/RNA sensing which cooperates with subsequent discriminative sensing by specific pattern recognition receptors. Promotes extracellular DNA-induced AIM2 inflammasome activation implicating AGER/RAGE. Disulfide HMGB1 binds to transmembrane receptors, such as AGER/RAGE, TLR2, TLR4 and probably TREM1, thus activating their signal transduction pathways. Mediates the release of cytokines/chemokines such as TNF, IL-1, IL-6, IL-8, CCL2, CCL3, CCL4 and CXCL10. Promotes secretion of interferon-gamma by macrophage-stimulated natural killer (NK) cells in concert with other cytokines like IL-2 or IL-12. TLR4 is proposed to be the primary receptor promoting macrophage activation and signaling through TLR4 seems to implicate LY96/MD-2. In bacterial LPS- or LTA-mediated inflammatory responses binds to the endotoxins and transfers them to CD14 for signaling to the respective TLR4:LY96 and TLR2 complexes. Contributes to tumor proliferation by association with ACER/RAGE. Can bind to IL1-beta and signals through the IL1R1:IL1RAP receptor complex. Binding to class A CpG activates cytokine production in plasmacytoid dendritic cells implicating TLR9, MYD88 and AGER/RAGE and can activate autoreactive B cells. Via HMGB1-containing chromatin immune complexes may also promote B cell responses to endogenous TLR9 ligands through a B-cell receptor (BCR)-dependent and ACER/RAGE-independent mechanism. Inhibits phagocytosis of apoptotic cells by macrophages; the function is dependent on poly-ADP-ribosylation and involves binding to phosphatidylserine on the cell surface of apoptotic cells. In adaptive immunity may be involved in enhancing immunity through activation of effector T-cells and suppression of regulatory T (TReg) cells. In contrast, without implicating effector or regulatory T-cells, required for tumor infiltration and activation of T-cells expressing the lymphotoxin LTA:LTB heterotrimer thus promoting tumor malignant progression. Also reported to limit proliferation of T-cells. Released HMGB1:nucleosome complexes formed during apoptosis can signal through TLR2 to induce cytokine production. Involved in induction of immunological tolerance by apoptotic cells; its pro-inflammatory activities when released by apoptotic cells are neutralized by reactive oxygen species (ROS)-dependent oxidation specifically on Cys-106. During macrophage activation by activated lymphocyte-derived self apoptotic DNA (ALD-DNA) promotes recruitment of ALD-DNA to endosomes. The chain is High mobility group protein B1 (HMGB1) from Cricetulus griseus (Chinese hamster).